A 626-amino-acid polypeptide reads, in one-letter code: Chaperone protein HtpG (626 aa).

The segment at 1–331 is a; substrate-binding; sequence MSETVERHEF…TDDLPLNVSR (331 aa). The tract at residues 332-544 is b; that stretch reads EMLQSTPTLQ…GMGPDLQMQR (213 aa). The interval 545-626 is c; the sequence is LLRRAGRGFG…GTAAKPAESA (82 aa).

This sequence belongs to the heat shock protein 90 family. In terms of assembly, homodimer.

The protein localises to the cytoplasm. Its function is as follows. Molecular chaperone. Has ATPase activity. This chain is Chaperone protein HtpG, found in Methylorubrum extorquens (strain PA1) (Methylobacterium extorquens).